The chain runs to 114 residues: MHELGITQNIVAIVAENANNRLIKRVTLEIGELSAIMPNAIEFCFDVCTQGTVLEGATLEIIKIPGLGKCRQCATEIPLEQPFGICHVCNSVELDIIQGQELKIKEMEVEELSV.

His-2 is a binding site for Ni(2+). The Zn(2+) site is built by Cys-70, Cys-73, Cys-86, and Cys-89.

This sequence belongs to the HypA/HybF family.

In terms of biological role, involved in the maturation of [NiFe] hydrogenases. Required for nickel insertion into the metal center of the hydrogenase. The polypeptide is Hydrogenase maturation factor HypA (Trichodesmium erythraeum (strain IMS101)).